The chain runs to 266 residues: Chymotrypsin-like elastase family member 1 (266 aa).

An N-terminal signal peptide occupies residues 1-16 (MLRFLVFASLVLYGHS). Residues 17-26 (TQDFPETNAR) constitute a propeptide, activation peptide. The Peptidase S1 domain maps to 27–264 (VVGGAEARRN…YISWMNNVIA (238 aa)). A disulfide bridge connects residues cysteine 56 and cysteine 72. Histidine 71 functions as the Charge relay system in the catalytic mechanism. Ca(2+)-binding residues include aspartate 85, asparagine 87, glutamine 90, and glutamate 95. Aspartate 119 (charge relay system) is an active-site residue. 3 disulfide bridges follow: cysteine 153–cysteine 220, cysteine 184–cysteine 200, and cysteine 210–cysteine 240. Serine 214 serves as the catalytic Charge relay system.

It belongs to the peptidase S1 family. Elastase subfamily. Ca(2+) is required as a cofactor. As to expression, pancreas.

It localises to the secreted. The catalysed reaction is Hydrolysis of proteins, including elastin. Preferential cleavage: Ala-|-Xaa.. Serine proteases that hydrolyze many proteins in addition to elastin. The chain is Chymotrypsin-like elastase family member 1 (Cela1) from Rattus norvegicus (Rat).